Here is a 402-residue protein sequence, read N- to C-terminus: UPF0261 protein mll9388 (402 aa).

The protein belongs to the UPF0261 family.

This Mesorhizobium japonicum (strain LMG 29417 / CECT 9101 / MAFF 303099) (Mesorhizobium loti (strain MAFF 303099)) protein is UPF0261 protein mll9388.